The primary structure comprises 126 residues: C-type natriuretic peptide 1 (126 aa).

A signal peptide spans 1–22; the sequence is MLCPALLCAALLLLTPVEITDA. Residues 23 to 104 constitute a propeptide that is removed on maturation; that stretch reads RALQQPSDAA…KRAEPDRSRR (82 aa). Cysteine 110 and cysteine 126 form a disulfide bridge.

This sequence belongs to the natriuretic peptide family.

The protein resides in the secreted. Functionally, exhibits natriuretic and vasodepressant activity. Has cGMP-stimulating activity. May help to regulate body fluid homeostasis in a variety of aquatic environments. In Takifugu rubripes (Japanese pufferfish), this protein is C-type natriuretic peptide 1.